A 356-amino-acid chain; its full sequence is Histidinol-phosphate aminotransferase (356 aa).

N6-(pyridoxal phosphate)lysine is present on Lys208.

It belongs to the class-II pyridoxal-phosphate-dependent aminotransferase family. Histidinol-phosphate aminotransferase subfamily. As to quaternary structure, homodimer. Requires pyridoxal 5'-phosphate as cofactor.

The enzyme catalyses L-histidinol phosphate + 2-oxoglutarate = 3-(imidazol-4-yl)-2-oxopropyl phosphate + L-glutamate. It functions in the pathway amino-acid biosynthesis; L-histidine biosynthesis; L-histidine from 5-phospho-alpha-D-ribose 1-diphosphate: step 7/9. The protein is Histidinol-phosphate aminotransferase of Lactococcus lactis subsp. cremoris (strain SK11).